The sequence spans 944 residues: Protein unc-45 homolog A (944 aa).

Residues 1–25 (MTVSGPETPEPRPSDPGASSAEQLR) form a disordered region. 3 TPR repeats span residues 21–54 (AEQLRKEGNELFKCGDYEGALTAYTQALSLGATP), 58–91 (AILHRNRAACHLKLEDYSKAESEASKAIEKDGGD), and 92–125 (VKALYRRSQALEKLGRLDQAVLDLKRCVSLEPKN). Residue Lys70 is modified to N6-acetyllysine. Lys483 bears the N6-acetyllysine mark.

Interacts with PGR isoforms A and B as well as with NR3C1 in the absence of ligand, and with HSP90AB1. Binding to HSP90AB1 involves 2 UNC45A monomers per HSP90AB1 dimer. As to expression, detected in spleen, bone marrow, lung and ovary, and at lower levels in testis, kidney, heart and brain (at protein level). Ubiquitous. Detected in uterus, large intestine, kidney, spleen, lung, brain, liver and ovary.

It is found in the cytoplasm. The protein localises to the perinuclear region. Its subcellular location is the nucleus. Functionally, may act as co-chaperone for HSP90 (Potential). Prevents the stimulation of HSP90AB1 ATPase activity by AHSA1. Positive factor in promoting PGR function in the cell. May be necessary for proper folding of myosin (Potential). Necessary for normal cell proliferation. Necessary for normal myotube formation and myosin accumulation during muscle cell development. May play a role in erythropoiesis in stroma cells in the spleen. The polypeptide is Protein unc-45 homolog A (Unc45a) (Mus musculus (Mouse)).